The chain runs to 417 residues: Phosphoglycerate kinase 2 (417 aa).

Residue Ser-2 is modified to N-acetylserine. Residues Ser-2 and Ser-4 each carry the phosphoserine modification. The residue at position 11 (Lys-11) is an N6-acetyllysine. Residues Val-23, Asp-24, Phe-25, Asn-26, Gln-38, Arg-39, Ser-62, His-63, Gly-65, and Arg-66 each contribute to the (2R)-3-phosphoglycerate site. N6-acetyllysine occurs at positions 75, 86, and 97. (2R)-3-phosphoglycerate is bound by residues Leu-122 and Arg-123. An N6-acetyllysine mark is found at Lys-131 and Lys-146. (2R)-3-phosphoglycerate-binding residues include His-170 and Arg-171. Tyr-196 bears the Phosphotyrosine mark. The residue at position 199 (Lys-199) is an N6-acetyllysine. Gly-214 provides a ligand contact to ADP. Position 214 (Gly-214) interacts with CDP. AMP-binding residues include Ala-215 and Lys-216. Ala-215 serves as a coordination point for ATP. Mg(2+) is bound at residue Ala-215. Positions 218 and 219 each coordinate Mg(2+). Asp-219 lines the CDP pocket. Lys-220 serves as a coordination point for AMP. Lys-220 contacts ATP. Gly-238 is an ADP binding site. Gly-238 provides a ligand contact to CDP. Gly-239 contacts AMP. Gly-239 lines the ATP pocket. 2 positions are modified to N6-acetyllysine: Lys-267 and Lys-291. An AMP-binding site is contributed by Ala-313. Ala-313 contributes to the ATP binding site. CDP contacts are provided by Gly-338 and Phe-343. An ADP-binding site is contributed by Phe-343. Residue Glu-344 participates in AMP binding. 3 residues coordinate ATP: Glu-344, Asp-375, and Thr-376. Asp-375 contributes to the Mg(2+) binding site.

It belongs to the phosphoglycerate kinase family. In terms of assembly, monomer. Mg(2+) is required as a cofactor. In terms of tissue distribution, testis specific.

It is found in the cytoplasm. The enzyme catalyses (2R)-3-phosphoglycerate + ATP = (2R)-3-phospho-glyceroyl phosphate + ADP. It participates in carbohydrate degradation; glycolysis; pyruvate from D-glyceraldehyde 3-phosphate: step 2/5. In terms of biological role, essential for sperm motility and male fertility but is not required for the completion of spermatogenesis. The chain is Phosphoglycerate kinase 2 from Sus scrofa (Pig).